The primary structure comprises 249 residues: Enolase-phosphatase E1 (249 aa).

The protein belongs to the HAD-like hydrolase superfamily. MasA/MtnC family. As to quaternary structure, monomer. Requires Mg(2+) as cofactor.

It carries out the reaction 5-methylsulfanyl-2,3-dioxopentyl phosphate + H2O = 1,2-dihydroxy-5-(methylsulfanyl)pent-1-en-3-one + phosphate. It functions in the pathway amino-acid biosynthesis; L-methionine biosynthesis via salvage pathway; L-methionine from S-methyl-5-thio-alpha-D-ribose 1-phosphate: step 3/6. It participates in amino-acid biosynthesis; L-methionine biosynthesis via salvage pathway; L-methionine from S-methyl-5-thio-alpha-D-ribose 1-phosphate: step 4/6. Functionally, bifunctional enzyme that catalyzes the enolization of 2,3-diketo-5-methylthiopentyl-1-phosphate (DK-MTP-1-P) into the intermediate 2-hydroxy-3-keto-5-methylthiopentenyl-1-phosphate (HK-MTPenyl-1-P), which is then dephosphorylated to form the acireductone 1,2-dihydroxy-3-keto-5-methylthiopentene (DHK-MTPene). In Synechococcus sp. (strain RCC307), this protein is Enolase-phosphatase E1.